We begin with the raw amino-acid sequence, 876 residues long: Alanine--tRNA ligase (876 aa).

Zn(2+)-binding residues include His-565, His-569, Cys-667, and His-671.

This sequence belongs to the class-II aminoacyl-tRNA synthetase family. Zn(2+) serves as cofactor.

The protein resides in the cytoplasm. It catalyses the reaction tRNA(Ala) + L-alanine + ATP = L-alanyl-tRNA(Ala) + AMP + diphosphate. In terms of biological role, catalyzes the attachment of alanine to tRNA(Ala) in a two-step reaction: alanine is first activated by ATP to form Ala-AMP and then transferred to the acceptor end of tRNA(Ala). Also edits incorrectly charged Ser-tRNA(Ala) and Gly-tRNA(Ala) via its editing domain. This is Alanine--tRNA ligase from Staphylococcus aureus (strain Mu3 / ATCC 700698).